A 213-amino-acid polypeptide reads, in one-letter code: LexA repressor 2 (213 aa).

The H-T-H motif DNA-binding region spans 27–47 (QTEIARAFGFKGVRAAQYHLE). Active-site for autocatalytic cleavage activity residues include Ser133 and Lys170.

It belongs to the peptidase S24 family. Homodimer.

It catalyses the reaction Hydrolysis of Ala-|-Gly bond in repressor LexA.. Represses a number of genes involved in the response to DNA damage (SOS response), including recA and lexA. In the presence of single-stranded DNA, RecA interacts with LexA causing an autocatalytic cleavage which disrupts the DNA-binding part of LexA, leading to derepression of the SOS regulon and eventually DNA repair. The chain is LexA repressor 2 from Xanthomonas oryzae pv. oryzae (strain KACC10331 / KXO85).